We begin with the raw amino-acid sequence, 437 residues long: GTPase Der (437 aa).

2 consecutive EngA-type G domains span residues 3–167 and 176–352; these read NLVA…KKES and PRFA…ENRM. GTP-binding positions include 9 to 16, 56 to 60, 119 to 122, 182 to 189, 229 to 233, and 294 to 297; these read GRPNVGKS, DTGGW, NKTD, GRPNAGKS, DTAGI, and NKWD. Residues 353 to 437 form the KH-like domain; sequence IKIPTARLNE…TPINIYIRQK (85 aa).

This sequence belongs to the TRAFAC class TrmE-Era-EngA-EngB-Septin-like GTPase superfamily. EngA (Der) GTPase family. In terms of assembly, associates with the 50S ribosomal subunit.

In terms of biological role, GTPase that plays an essential role in the late steps of ribosome biogenesis. This chain is GTPase Der, found in Bacteroides fragilis (strain ATCC 25285 / DSM 2151 / CCUG 4856 / JCM 11019 / LMG 10263 / NCTC 9343 / Onslow / VPI 2553 / EN-2).